Reading from the N-terminus, the 219-residue chain is MGKGNNMIPNGHFHKDWQRFVKTWFNQPARRHRRKQNRIKKAKAVAPRPAAGPLRPVVRCPTIRYHTKVRAGRGFTLREIRAAGLNPAFARTIGIAVDPRRRNKSVESLQVNVQRLKEYRARLILFPKGKKVLKGEANEEERKLATQLRGPLMPVQQPAPKSIARAITEEEKDFKAYQYLRGARSIAKLVGIRAKRLKDAAENPDDVTKAPTAVKRNKT.

The tract at residues lysine 198–threonine 219 is disordered.

The protein belongs to the eukaryotic ribosomal protein eL13 family. Component of the 60S large ribosomal subunit (LSU).

The protein resides in the cytoplasm. Its function is as follows. Component of the ribosome, a large ribonucleoprotein complex responsible for the synthesis of proteins in the cell. The small ribosomal subunit (SSU) binds messenger RNAs (mRNAs) and translates the encoded message by selecting cognate aminoacyl-transfer RNA (tRNA) molecules. The large subunit (LSU) contains the ribosomal catalytic site termed the peptidyl transferase center (PTC), which catalyzes the formation of peptide bonds, thereby polymerizing the amino acids delivered by tRNAs into a polypeptide chain. The nascent polypeptides leave the ribosome through a tunnel in the LSU and interact with protein factors that function in enzymatic processing, targeting, and the membrane insertion of nascent chains at the exit of the ribosomal tunnel. As part of the LSU, it is probably required for its formation and the maturation of rRNAs. This chain is Large ribosomal subunit protein eL13 (RpL13), found in Spodoptera frugiperda (Fall armyworm).